Consider the following 216-residue polypeptide: Homologous-pairing protein 2 (216 aa).

This sequence belongs to the HOP2 family. As to quaternary structure, interacts with mcp7.

It is found in the nucleus. In terms of biological role, required for proper homologous pairing and efficient cross-over and intragenic recombination during meiosis. Acts indirectly in a process facilitating homologous recombination. Acts during mid- to late-horse-tail period. In Schizosaccharomyces pombe (strain 972 / ATCC 24843) (Fission yeast), this protein is Homologous-pairing protein 2 (meu13).